Reading from the N-terminus, the 327-residue chain is Malate dehydrogenase (327 aa).

Glycine 12 to alanine 18 is an NAD(+) binding site. 2 residues coordinate substrate: arginine 93 and arginine 99. NAD(+) contacts are provided by residues asparagine 106, glutamine 113, and valine 130–asparagine 132. Residues asparagine 132 and arginine 163 each coordinate substrate. Histidine 188 (proton acceptor) is an active-site residue.

Belongs to the LDH/MDH superfamily. MDH type 2 family.

It carries out the reaction (S)-malate + NAD(+) = oxaloacetate + NADH + H(+). In terms of biological role, catalyzes the reversible oxidation of malate to oxaloacetate. The protein is Malate dehydrogenase of Paraburkholderia phytofirmans (strain DSM 17436 / LMG 22146 / PsJN) (Burkholderia phytofirmans).